Here is a 119-residue protein sequence, read N- to C-terminus: Large ribosomal subunit protein bL20 (119 aa).

The protein belongs to the bacterial ribosomal protein bL20 family.

Its function is as follows. Binds directly to 23S ribosomal RNA and is necessary for the in vitro assembly process of the 50S ribosomal subunit. It is not involved in the protein synthesizing functions of that subunit. This Verminephrobacter eiseniae (strain EF01-2) protein is Large ribosomal subunit protein bL20.